Consider the following 160-residue polypeptide: Transcription elongation factor GreA (160 aa).

Residues 1-72 (MAEKTYVMTL…QIQILETKIR (72 aa)) are a coiled coil.

The protein belongs to the GreA/GreB family.

In terms of biological role, necessary for efficient RNA polymerase transcription elongation past template-encoded arresting sites. The arresting sites in DNA have the property of trapping a certain fraction of elongating RNA polymerases that pass through, resulting in locked ternary complexes. Cleavage of the nascent transcript by cleavage factors such as GreA or GreB allows the resumption of elongation from the new 3'terminus. GreA releases sequences of 2 to 3 nucleotides. The chain is Transcription elongation factor GreA from Streptococcus thermophilus (strain CNRZ 1066).